A 341-amino-acid chain; its full sequence is Ribosomal RNA small subunit methyltransferase C (341 aa).

This sequence belongs to the methyltransferase superfamily. RsmC family. In terms of assembly, monomer.

It is found in the cytoplasm. The catalysed reaction is guanosine(1207) in 16S rRNA + S-adenosyl-L-methionine = N(2)-methylguanosine(1207) in 16S rRNA + S-adenosyl-L-homocysteine + H(+). In terms of biological role, specifically methylates the guanine in position 1207 of 16S rRNA in the 30S particle. The sequence is that of Ribosomal RNA small subunit methyltransferase C from Shewanella pealeana (strain ATCC 700345 / ANG-SQ1).